The sequence spans 205 residues: uncharacterized protein (205 aa).

A run of 5 helical transmembrane segments spans residues 4-24, 105-125, 130-150, 151-171, and 182-202; these read LAFL…AIDD, KWFI…LWIL, FLLF…KIPN, WLFN…VPEC, and ITIP…KFII.

The protein resides in the cell membrane. This is an uncharacterized protein from Methanocaldococcus jannaschii (strain ATCC 43067 / DSM 2661 / JAL-1 / JCM 10045 / NBRC 100440) (Methanococcus jannaschii).